The primary structure comprises 750 residues: Photosystem I P700 chlorophyll a apoprotein A1 (750 aa).

8 consecutive transmembrane segments (helical) span residues 70–93 (VFSA…FHGA), 156–179 (LYCT…FHYH), 195–219 (LNHH…HVSL), 291–309 (IAHH…GHMY), 346–369 (WHAQ…HHMY), 385–411 (LSLF…IFMV), 433–455 (AIIS…LYIH), and 531–549 (FLVH…LILL). Residues cysteine 573 and cysteine 582 each coordinate [4Fe-4S] cluster. A run of 2 helical transmembrane segments spans residues 589–610 (HVFL…HFSW) and 664–686 (LSAY…MFLF). Histidine 675 is a chlorophyll a' binding site. Residues methionine 683 and tyrosine 691 each coordinate chlorophyll a. Tryptophan 692 provides a ligand contact to phylloquinone. The chain crosses the membrane as a helical span at residues 724–744 (AVGVTHYLLGGIATTWAFFLA).

The protein belongs to the PsaA/PsaB family. As to quaternary structure, the PsaA/B heterodimer binds the P700 chlorophyll special pair and subsequent electron acceptors. PSI consists of a core antenna complex that captures photons, and an electron transfer chain that converts photonic excitation into a charge separation. The eukaryotic PSI reaction center is composed of at least 11 subunits. It depends on P700 is a chlorophyll a/chlorophyll a' dimer, A0 is one or more chlorophyll a, A1 is one or both phylloquinones and FX is a shared 4Fe-4S iron-sulfur center. as a cofactor.

It localises to the plastid. It is found in the chloroplast thylakoid membrane. The catalysed reaction is reduced [plastocyanin] + hnu + oxidized [2Fe-2S]-[ferredoxin] = oxidized [plastocyanin] + reduced [2Fe-2S]-[ferredoxin]. In terms of biological role, psaA and PsaB bind P700, the primary electron donor of photosystem I (PSI), as well as the electron acceptors A0, A1 and FX. PSI is a plastocyanin-ferredoxin oxidoreductase, converting photonic excitation into a charge separation, which transfers an electron from the donor P700 chlorophyll pair to the spectroscopically characterized acceptors A0, A1, FX, FA and FB in turn. Oxidized P700 is reduced on the lumenal side of the thylakoid membrane by plastocyanin. This Nasturtium officinale (Watercress) protein is Photosystem I P700 chlorophyll a apoprotein A1.